A 104-amino-acid chain; its full sequence is MKLTTTFLVLCVALLSDSGVAFFMDSLAKPAVEPVAALAPAAEAVAGAVPSLPLSHLAILRFILASMGIPLDPLIEGSRKCVTELGPEAVGAVKSLLGVLTMFG.

The signal sequence occupies residues 1 to 21; sequence MKLTTTFLVLCVALLSDSGVA.

The protein belongs to the secretoglobin family. UGRP subfamily. Homodimer; disulfide-linked. As to expression, highly expressed in lung, where it localizes to epithelial cells lining the trachea and bronchi. Expression in lung is mainly restricted to bronchi, submucosal glands of the trachea, and tracheal epithelium, with little expression in terminal bronchioles. Expressed in uterus where it localizes to epithelial cells of the uterine glands. Also detected in heart, stomach and small intestine.

It localises to the secreted. Secreted cytokine-like protein. Inhibits cell growth in vitro. This Mus musculus (Mouse) protein is Secretoglobin family 3A member 1 (Scgb3a1).